The primary structure comprises 295 residues: MKFTKGHGTQNDFVVLPDVHIKRDLSVAAVQALCDRQRGLGADGVLRVTTVGAALEGGVLAEKPAGVSSEDWFMDYRNADGSIAEMCGNGVRVFAHYLRSVGLEHRDEFVVASLAGPRPVRINSWSQLTADVTVDMGPVKEFGAGEAIVGGRRFSGLAIDVGNPHLACVDAVLTTEQLRILDVGAPVTFDEQLFPDGVNVEVLTAPSAGPANTVHMRVHERGVGETRSCGTGTVAAAYAALRHIGQRTGEVVVNIPGGQVRVTVTGESSFLRGPSMLLADGEISDEWWGGIGACG.

Substrate-binding residues include Asn11 and Asn78. Cys87 acts as the Proton donor in catalysis. Residues 88-89 (GN), Asn163, Asn199, and 220-221 (ER) contribute to the substrate site. The active-site Proton acceptor is Cys229. 230-231 (GT) contacts substrate.

Belongs to the diaminopimelate epimerase family. In terms of assembly, homodimer.

Its subcellular location is the cytoplasm. It carries out the reaction (2S,6S)-2,6-diaminopimelate = meso-2,6-diaminopimelate. Its pathway is amino-acid biosynthesis; L-lysine biosynthesis via DAP pathway; DL-2,6-diaminopimelate from LL-2,6-diaminopimelate: step 1/1. Functionally, catalyzes the stereoinversion of LL-2,6-diaminopimelate (L,L-DAP) to meso-diaminopimelate (meso-DAP), a precursor of L-lysine and an essential component of the bacterial peptidoglycan. This Mycobacteroides abscessus (strain ATCC 19977 / DSM 44196 / CCUG 20993 / CIP 104536 / JCM 13569 / NCTC 13031 / TMC 1543 / L948) (Mycobacterium abscessus) protein is Diaminopimelate epimerase.